Here is a 210-residue protein sequence, read N- to C-terminus: uncharacterized protein (210 aa).

Transmembrane regions (helical) follow at residues 9–29 (WVVT…IIAK), 35–55 (LIVN…MAWP), 64–84 (GPAV…VVAV), 91–111 (GLYG…AAMN), 149–169 (IWFS…AVFW), and 190–210 (IGQA…LFPV).

The protein localises to the cell membrane. This is an uncharacterized protein from Mycobacterium bovis (strain ATCC BAA-935 / AF2122/97).